The sequence spans 360 residues: N5-carboxyaminoimidazole ribonucleotide synthase (360 aa).

ATP-binding positions include Arg98, Lys138, 143 to 149 (GYDGKGQ), 173 to 176 (EGFV), Glu181, His204, and 255 to 256 (NE). Residues 102 to 285 (KSMFKDLGIP…QFENHLRAVA (184 aa)) enclose the ATP-grasp domain.

It belongs to the PurK/PurT family. Homodimer.

It catalyses the reaction 5-amino-1-(5-phospho-beta-D-ribosyl)imidazole + hydrogencarbonate + ATP = 5-carboxyamino-1-(5-phospho-D-ribosyl)imidazole + ADP + phosphate + 2 H(+). It participates in purine metabolism; IMP biosynthesis via de novo pathway; 5-amino-1-(5-phospho-D-ribosyl)imidazole-4-carboxylate from 5-amino-1-(5-phospho-D-ribosyl)imidazole (N5-CAIR route): step 1/2. In terms of biological role, catalyzes the ATP-dependent conversion of 5-aminoimidazole ribonucleotide (AIR) and HCO(3)(-) to N5-carboxyaminoimidazole ribonucleotide (N5-CAIR). This chain is N5-carboxyaminoimidazole ribonucleotide synthase, found in Pseudomonas aeruginosa (strain ATCC 15692 / DSM 22644 / CIP 104116 / JCM 14847 / LMG 12228 / 1C / PRS 101 / PAO1).